The sequence spans 1204 residues: MEMEQVNALCEELVKAVTVMMDPSSTQRYRLEALKFCEEFKEKCPICVPCGLKLAEKTQIAIVRHFGLQILEHVVKFRWNSMSRLEKVYLKNSVMELIANGTLRILEEENHIKDVLSRIVVEMIKREWPQHWPDMLMELDTLFRQGETQRELVMFILLRLAEDVVTFQTLPTQRRRDIQQTLTQNMERILNFLLNTLQENVNKYQQMKTDSSQEAEAQANCRVSVAALNTLAGYIDWVSLNHITAENCKLVETLCLLLNEQELQLGAAECLLIAVSRKGKLEDRKRLMILFGDVAMHYILSAAQTADGGGLVEKHYLFLKRLCQVLCALGNLLCALLALDANIQTPINFGMYLESFLAFTTHPSQFLRSSTHMTWGALFRHEVLSRDPALLAVIPKYLRASMTNLVKMGFPSKTDSPSCEYSRFDFDSDEDFNAFFNSSRAQHGEVVRCVCRLDPKTSFQMAAEWLKYQLSASIDTGPVNSCSTAGTGEGGFCSIFSPSYVQWEAMTFFLESVINQMFRTLDKEELPVSDGIELLQLVLNFEIKDPLVLSCVLTNVSALFPFVTYKPAFLPQVFSKLFSFVTFESVGESKAPRTRAVRNVRRHACSSINKMCRDYPDLVLPNFDMLYSHVKQLLSNELLLTQMEKCALMEALVLVSNQFKDYERQKLFLEELMAPVVNIWLSEEMCRALSDIDSFIAYVGADLKSCDPAVEDPCGLNRARMSFCVYSILGVMRRTSWPSDLEEAKAGGFVVGYTPSGNPIFRNPCTEQILRLLDNLLALVRTHNTLYTPEMLTKMAEPFTKALDIVESEKTAILGLPQPLLEFNDHPVYRTTLERMQRFFGILYENCYHILGKAGPSMQQDFYTVEDLASQLLGSAFVNLNNIPDFRLRSMLRVFVKPLVLFCPSEHYETLISPILGPLFTYLHMRLSQKWHVINQRSILCGEDEIAEDNPESQEMLEEQLVRMLTREAMDLIMACCVSKKTADHTAAPTADGDDEEMMATEVAPSSVVELTDLGKCLMKHEDVCTALLITAFNSLTWKDTLSCQRATTQLCWPLLKQVMSGTLLADAVTWLFTSVLKGLQMHGQHDGCMASLVHLAFQIYEALRPRYLEIRAVMEQIPEINKESLDQFDCKLLNPSLQKAADKRRKDHFKRLIAGCIGKPLGEQFRKEVHIKNLPWLFKKPKPMLETEVLDSEEGGLATIFEP.

Residues 1 to 108 form a necessary for interaction with Ran region; that stretch reads MEMEQVNALC…ANGTLRILEE (108 aa). Residue lysine 396 is modified to N6-acetyllysine. Residues 533–640 are necessary for interaction with ILF3; sequence ELLQLVLNFE…KQLLSNELLL (108 aa). Residues 641–642 are pre-siRNA binding; sequence TQ.

Belongs to the exportin family. In terms of assembly, component of a nuclear export receptor complex composed of XPO5, RAN, dsRNA-binding proteins and dsRNA. Found in a nuclear export complex with XPO5, RAN, EEF1A1, and aminoacylated tRNA. Found in a nuclear export complex with XPO5, RAN, ILF3 and dsRNA. Found in a nuclear export complex with XPO5, RAN and pre-miRNA. Found in a nuclear export complex with XPO5, RAN, ILF3 and minihelix VA1 dsRNA. Found in a nuclear export complex with XPO5, RAN, ILF3, ZNF346 and dsRNA. Interacts with EEF1A1, ILF3, NUP153, NUP214 and ZNF346. Interacts with RAN and cargo proteins in a GTP-dependent manner. Interacts with ADAR/ADAR1 (via DRBM domains). Interacts with SMAD4; mediates nuclear export of SMAD4. Interacts with RAN (GTP-bound form).

The protein resides in the nucleus. The protein localises to the cytoplasm. Mediates the nuclear export of proteins bearing a double-stranded RNA binding domain (dsRBD) and double-stranded RNAs (cargos). XPO5 in the nucleus binds cooperatively to the RNA and to the GTPase Ran in its active GTP-bound form. Proteins containing dsRBDs can associate with this trimeric complex through the RNA. Docking of this complex to the nuclear pore complex (NPC) is mediated through binding to nucleoporins. Upon transit of a nuclear export complex into the cytoplasm, hydrolysis of Ran-GTP to Ran-GDP (induced by RANBP1 and RANGAP1, respectively) cause disassembly of the complex and release of the cargo from the export receptor. XPO5 then returns to the nuclear compartment by diffusion through the nuclear pore complex, to mediate another round of transport. The directionality of nuclear export is thought to be conferred by an asymmetric distribution of the GTP- and GDP-bound forms of Ran between the cytoplasm and nucleus. Overexpression may in some circumstances enhance RNA-mediated gene silencing (RNAi). Mediates nuclear export of ADAR/ADAR1 in a RanGTP-dependent manner. Its function is as follows. Mediates the nuclear export of micro-RNA precursors, which form short hairpins. Also mediates the nuclear export of synthetic short hairpin RNAs used for RNA interference. In some circumstances can also mediate the nuclear export of deacylated and aminoacylated tRNAs. Specifically recognizes dsRNAs that lack a 5'-overhang in a sequence-independent manner, have only a short 3'-overhang, and that have a double-stranded length of at least 15 base-pairs. Binding is dependent on Ran-GTP. The protein is Exportin-5 (Xpo5) of Mus musculus (Mouse).